A 470-amino-acid chain; its full sequence is Regulator of microtubule dynamics protein 3 (470 aa).

At Met-1–Ala-12 the chain is on the mitochondrial intermembrane side. A helical transmembrane segment spans residues Gly-13–Trp-35. Over Lys-36 to Gly-470 the chain is Cytoplasmic. A phosphoserine mark is found at Ser-44, Ser-46, Ser-50, and Ser-57. Residues Leu-91–Glu-125 adopt a coiled-coil conformation. Positions Val-157–Ser-163 match the FFAT motif. Thr-160 carries the post-translational modification Phosphothreonine. The disordered stretch occupies residues Thr-168 to Val-205. Phosphoserine is present on residues Ser-183, Ser-193, Ser-212, and Ser-233. Basic and acidic residues predominate over residues Asp-184 to Gly-194.

The protein belongs to the RMDN family. As to quaternary structure, interacts with PTPN2. Interacts with microtubules. Interacts with VAPB. Interacts (via FFAT motif) with MOSPD2 (via MSP domain). Interacts (via phosphorylated FFAT motif) with MOSPD2, VAPA and VAPB. Post-translationally, phosphorylation at Thr-160 of the FFAT motif activates interaction with MOSPD2, VAPA and VAPB.

The protein localises to the mitochondrion outer membrane. It localises to the cytoplasm. It is found in the nucleus. Its subcellular location is the cytoskeleton. The protein resides in the spindle. The protein localises to the spindle pole. Involved in cellular calcium homeostasis regulation. May participate in differentiation and apoptosis of keratinocytes. Overexpression induces apoptosis. In Mus musculus (Mouse), this protein is Regulator of microtubule dynamics protein 3.